Here is a 343-residue protein sequence, read N- to C-terminus: 3-dehydroquinate synthase (343 aa).

NAD(+) is bound by residues 61–66, 95–99, 119–120, Lys-132, Lys-141, and 159–162; these read SGEKYK, GVISD, TT, and FLKT. Residues Glu-174, His-231, and His-248 each contribute to the Zn(2+) site.

The protein belongs to the sugar phosphate cyclases superfamily. Dehydroquinate synthase family. Co(2+) is required as a cofactor. It depends on Zn(2+) as a cofactor. NAD(+) serves as cofactor.

The protein localises to the cytoplasm. The enzyme catalyses 7-phospho-2-dehydro-3-deoxy-D-arabino-heptonate = 3-dehydroquinate + phosphate. It participates in metabolic intermediate biosynthesis; chorismate biosynthesis; chorismate from D-erythrose 4-phosphate and phosphoenolpyruvate: step 2/7. In terms of biological role, catalyzes the conversion of 3-deoxy-D-arabino-heptulosonate 7-phosphate (DAHP) to dehydroquinate (DHQ). This Helicobacter pylori (strain HPAG1) protein is 3-dehydroquinate synthase.